The primary structure comprises 88 residues: Arminin 1b (88 aa).

Positions 1–18 (MKTVLAFLFLTFIAFTHA) are cleaved as a signal peptide. Residues 19-57 (ESYEDVKEEIKNEVEREIFEDLEEESDVLESNVRELNDA) constitute a propeptide that is removed on maturation. At Val-85 the chain carries Valine amide.

Belongs to the arminin family. As to expression, expressed in entodermal epithelium along the body column.

It localises to the secreted. The protein resides in the target cell membrane. Antimicrobial peptide with a broad-spectrum antimicrobial activity. Keeps its antibacterial activity under a wide range of salt concentrations that mimic physiological conditions of human blood, which is surprising, since Hydra is an obligate freshwater animal with nearly no salt tolerance. Does not affect red blood cells. The chain is Arminin 1b from Hydra vulgaris (Hydra).